Here is a 448-residue protein sequence, read N- to C-terminus: Arginine synthetase ArcE (448 aa).

Probably forms homotetramers and higher assemblies of tetramers. Requires Mg(2+) as cofactor.

The enzyme catalyses L-arginine + ADP + phosphate + H(+) = L-citrulline + NH4(+) + ATP. Its pathway is amino-acid biosynthesis; L-proline biosynthesis. It functions in the pathway amino-acid degradation; L-arginine degradation. It participates in amino-acid biosynthesis; L-arginine biosynthesis. In terms of biological role, arginine deiminase involved in an arginine synthetase pathway, which provides citrulline and ornithine, the precursors for proline biosynthesis. Catalyzes the conversion of L-arginine to citrulline while conserving the energy of arginine deimination to generate ATP from ADP and free phosphate. Is specific toward L-arginine and cannot use D-arginine, agmatine, guanidine, L-alanine-L-arginine dipeptide and L-arginine-L-alanine dipeptide. Can also use CDP, GDP or UDP, with lower activity (38%, 8.4% and 13.3%, respectively). The enzyme can also catalyze the reverse reaction: the ATP-dependent generation of arginine from citrulline in a single reaction by using free ammonia, without the requirement of aspartic acid. In vivo, most likely functions in the arginine catabolism to produce citrulline for proline biosynthesis while also generating ATP, but it can also contribute to arginine biosynthesis when the necessary precursors such as citrulline are abundant. This chain is Arginine synthetase ArcE, found in Thermococcus kodakarensis (strain ATCC BAA-918 / JCM 12380 / KOD1) (Pyrococcus kodakaraensis (strain KOD1)).